The sequence spans 278 residues: MLADIRYWENDATNKHYAIAHFNVWNAEMLMGVIDAAEEAKSPVIISFGTGFVGNTSFEDFSHMMVSMAQKATVPVITHWDHGRSMEIIHNAWTHGMNSLMRDASAFDFEENIRLTKEAVDFFHPLGIPVEAELGHVGNETVYEEALAGYHYTDPDQAAEFVERTGCDSLAVAIGNQHGVYTSEPQLNFEVVKRVRDAVSVPLVLHGASGISDADIKTAISLGIAKINIHTELCQAAMVAVKENQDQPFLHLEREVRKAVKERALEKIKLFGSDGKAE.

This is an uncharacterized protein from Escherichia coli (strain K12).